The following is a 90-amino-acid chain: Bombyxin B-6 (90 aa).

Residues 1 to 20 (MMKTSVMFMLVVVISLMCSS) form the signal peptide. 3 disulfide bridges follow: C30-C76, C42-C89, and C75-C80. Residues 49–67 (GVAQYAPYFWTRQYLGSRG) constitute a propeptide, c peptide like.

The protein belongs to the insulin family. In terms of assembly, heterodimer of a B chain and an A chain linked by two disulfide bonds.

It is found in the secreted. Brain peptide responsible for activation of prothoracic glands to produce ecdysone in insects. This Bombyx mori (Silk moth) protein is Bombyxin B-6 (BBXB6).